Reading from the N-terminus, the 341-residue chain is Holliday junction branch migration complex subunit RuvB (341 aa).

The segment at 4-185 (TDRLIVPTAV…FGIVARLEFY (182 aa)) is large ATPase domain (RuvB-L). Residues Leu-24, Arg-25, Gly-66, Lys-69, Thr-70, Thr-71, 132–134 (EDF), Arg-175, Tyr-185, and Arg-222 each bind ATP. Thr-70 is a binding site for Mg(2+). The segment at 186–256 (SAEELGYIVH…VADAALVMLD (71 aa)) is small ATPAse domain (RuvB-S). The interval 259-341 (RAGLDVMDRK…ATPASDAELF (83 aa)) is head domain (RuvB-H). The DNA site is built by Arg-295, Arg-314, and Arg-319.

Belongs to the RuvB family. As to quaternary structure, homohexamer. Forms an RuvA(8)-RuvB(12)-Holliday junction (HJ) complex. HJ DNA is sandwiched between 2 RuvA tetramers; dsDNA enters through RuvA and exits via RuvB. An RuvB hexamer assembles on each DNA strand where it exits the tetramer. Each RuvB hexamer is contacted by two RuvA subunits (via domain III) on 2 adjacent RuvB subunits; this complex drives branch migration. In the full resolvosome a probable DNA-RuvA(4)-RuvB(12)-RuvC(2) complex forms which resolves the HJ.

It is found in the cytoplasm. It carries out the reaction ATP + H2O = ADP + phosphate + H(+). Its function is as follows. The RuvA-RuvB-RuvC complex processes Holliday junction (HJ) DNA during genetic recombination and DNA repair, while the RuvA-RuvB complex plays an important role in the rescue of blocked DNA replication forks via replication fork reversal (RFR). RuvA specifically binds to HJ cruciform DNA, conferring on it an open structure. The RuvB hexamer acts as an ATP-dependent pump, pulling dsDNA into and through the RuvAB complex. RuvB forms 2 homohexamers on either side of HJ DNA bound by 1 or 2 RuvA tetramers; 4 subunits per hexamer contact DNA at a time. Coordinated motions by a converter formed by DNA-disengaged RuvB subunits stimulates ATP hydrolysis and nucleotide exchange. Immobilization of the converter enables RuvB to convert the ATP-contained energy into a lever motion, pulling 2 nucleotides of DNA out of the RuvA tetramer per ATP hydrolyzed, thus driving DNA branch migration. The RuvB motors rotate together with the DNA substrate, which together with the progressing nucleotide cycle form the mechanistic basis for DNA recombination by continuous HJ branch migration. Branch migration allows RuvC to scan DNA until it finds its consensus sequence, where it cleaves and resolves cruciform DNA. The sequence is that of Holliday junction branch migration complex subunit RuvB from Thiobacillus denitrificans (strain ATCC 25259 / T1).